Consider the following 681-residue polypeptide: UvrABC system protein C (681 aa).

A GIY-YIG domain is found at 16-95 (DSPGVYKFRD…IKEYDPRFNV (80 aa)). One can recognise a UVR domain in the interval 208–243 (GTYIRRLERQMTDAAEEMEYEKAARLRDDIGALKKA). Positions 650–681 (EIMEDEEPGTTAGSSQEPVSAGTSDERRGQET) are disordered. Polar residues predominate over residues 660–672 (TAGSSQEPVSAGT).

It belongs to the UvrC family. As to quaternary structure, interacts with UvrB in an incision complex.

It is found in the cytoplasm. The UvrABC repair system catalyzes the recognition and processing of DNA lesions. UvrC both incises the 5' and 3' sides of the lesion. The N-terminal half is responsible for the 3' incision and the C-terminal half is responsible for the 5' incision. The protein is UvrABC system protein C of Streptomyces avermitilis (strain ATCC 31267 / DSM 46492 / JCM 5070 / NBRC 14893 / NCIMB 12804 / NRRL 8165 / MA-4680).